A 255-amino-acid polypeptide reads, in one-letter code: Adenosine 5'-phosphosulfate reductase (255 aa).

The tract at residues 1 to 39 (MMTAEVRTPEQGGGPLTTEPRAPRSAPGHADASAPAFGP) is disordered. The [4Fe-4S] cluster site is built by C137, C138, C220, and C223. C246 (nucleophile; cysteine thiosulfonate intermediate) is an active-site residue.

It belongs to the PAPS reductase family. CysH subfamily. The cofactor is [4Fe-4S] cluster.

Its subcellular location is the cytoplasm. It carries out the reaction [thioredoxin]-disulfide + sulfite + AMP + 2 H(+) = adenosine 5'-phosphosulfate + [thioredoxin]-dithiol. Its pathway is sulfur metabolism; hydrogen sulfide biosynthesis; sulfite from sulfate. In terms of biological role, catalyzes the formation of sulfite from adenosine 5'-phosphosulfate (APS) using thioredoxin as an electron donor. The protein is Adenosine 5'-phosphosulfate reductase of Deinococcus radiodurans (strain ATCC 13939 / DSM 20539 / JCM 16871 / CCUG 27074 / LMG 4051 / NBRC 15346 / NCIMB 9279 / VKM B-1422 / R1).